The sequence spans 491 residues: Chromosomal replication initiator protein DnaA (491 aa).

Residues 1-69 (MTTWDKCLKK…TIQECHGNDL (69 aa)) form a domain I, interacts with DnaA modulators region. The tract at residues 69–154 (LIIEYSNKKF…KEDEEYSFGL (86 aa)) is domain II. The segment at 155 to 371 (PLKEKYVFDS…GALNRVLTTS (217 aa)) is domain III, AAA+ region. ATP-binding residues include glycine 199, glycine 201, lysine 202, and threonine 203. Residues 372–491 (KFNHKDPTIE…YELLLDKISR (120 aa)) form a domain IV, binds dsDNA region.

This sequence belongs to the DnaA family. As to quaternary structure, oligomerizes as a right-handed, spiral filament on DNA at oriC.

The protein localises to the cytoplasm. Functionally, plays an essential role in the initiation and regulation of chromosomal replication. ATP-DnaA binds to the origin of replication (oriC) to initiate formation of the DNA replication initiation complex once per cell cycle. Binds the DnaA box (a 9 base pair repeat at the origin) and separates the double-stranded (ds)DNA. Forms a right-handed helical filament on oriC DNA; dsDNA binds to the exterior of the filament while single-stranded (ss)DNA is stabiized in the filament's interior. The ATP-DnaA-oriC complex binds and stabilizes one strand of the AT-rich DNA unwinding element (DUE), permitting loading of DNA polymerase. After initiation quickly degrades to an ADP-DnaA complex that is not apt for DNA replication. Binds acidic phospholipids. In Francisella tularensis subsp. novicida (strain U112), this protein is Chromosomal replication initiator protein DnaA.